Consider the following 186-residue polypeptide: Signal peptidase I P (186 aa).

The Cytoplasmic segment spans residues 1 to 15; that stretch reads MTKEKVFKKKSSILE. Residues 16 to 35 traverse the membrane as a helical segment; that stretch reads WGKAIVIAVILALLIRNFLF. The Extracellular portion of the chain corresponds to 36 to 186; the sequence is EPYVVEGKSM…FPFSNMRKAK (151 aa). Catalysis depends on residues Ser-44 and Lys-86.

It belongs to the peptidase S26 family.

The protein localises to the cell membrane. The catalysed reaction is Cleavage of hydrophobic, N-terminal signal or leader sequences from secreted and periplasmic proteins.. The polypeptide is Signal peptidase I P (sipP) (Bacillus subtilis subsp. natto).